The primary structure comprises 160 residues: Cytochrome b6-f complex subunit 4 (160 aa).

A run of 3 helical transmembrane segments spans residues 36 to 56 (LLYV…GLAV), 95 to 115 (LLGV…PFIE), and 131 to 151 (LVFI…CLPI).

The protein belongs to the cytochrome b family. PetD subfamily. As to quaternary structure, the 4 large subunits of the cytochrome b6-f complex are cytochrome b6, subunit IV (17 kDa polypeptide, petD), cytochrome f and the Rieske protein, while the 4 small subunits are petG, petL, petM and petN. The complex functions as a dimer.

The protein resides in the plastid. The protein localises to the chloroplast thylakoid membrane. Component of the cytochrome b6-f complex, which mediates electron transfer between photosystem II (PSII) and photosystem I (PSI), cyclic electron flow around PSI, and state transitions. The chain is Cytochrome b6-f complex subunit 4 from Trieres chinensis (Marine centric diatom).